Consider the following 195-residue polypeptide: Alkyl hydroperoxide reductase C (195 aa).

A Thioredoxin domain is found at 4–170 (LTIGDQFPEY…VLRVLDALQS (167 aa)). Lys-41 participates in a covalent cross-link: Isoglutamyl lysine isopeptide (Lys-Gln) (interchain with Q-Cter in protein Pup). The active-site Cysteine sulfenic acid (-SOH) intermediate is Cys-61.

Belongs to the peroxiredoxin family. AhpC/Prx1 subfamily. In terms of assembly, homodimer; disulfide-linked, upon oxidation. 6 homodimers assemble to form a ring-like dodecamer. Identified in a complex with AhpD, DlaT and Lpd.

The protein localises to the cytoplasm. The catalysed reaction is N(6)-[(R)-dihydrolipoyl]-L-lysyl-[lipoyl-carrier protein] + a hydroperoxide = N(6)-[(R)-lipoyl]-L-lysyl-[lipoyl-carrier protein] + an alcohol + H2O. In terms of biological role, thiol-specific peroxidase that catalyzes the reduction of hydrogen peroxide and organic hydroperoxides to water and alcohols, respectively. Plays a role in cell protection against oxidative stress by detoxifying peroxides. Together with AhpD, DlaT and Lpd, constitutes an NADH-dependent peroxidase active against hydrogen and alkyl peroxides as well as serving as a peroxynitrite reductase, thus protecting the bacterium against reactive nitrogen intermediates and oxidative stress generated by the host immune system. Does not however seem to play a role in detoxification of isoniazid. The sequence is that of Alkyl hydroperoxide reductase C from Mycolicibacterium smegmatis (strain ATCC 700084 / mc(2)155) (Mycobacterium smegmatis).